Here is a 213-residue protein sequence, read N- to C-terminus: Thymidylate kinase (213 aa).

Residue 9–16 coordinates ATP; sequence GLEGAGKS.

This sequence belongs to the thymidylate kinase family.

It catalyses the reaction dTMP + ATP = dTDP + ADP. Its function is as follows. Phosphorylation of dTMP to form dTDP in both de novo and salvage pathways of dTTP synthesis. The chain is Thymidylate kinase from Aeromonas hydrophila subsp. hydrophila (strain ATCC 7966 / DSM 30187 / BCRC 13018 / CCUG 14551 / JCM 1027 / KCTC 2358 / NCIMB 9240 / NCTC 8049).